Consider the following 1503-residue polypeptide: Chromosome partition protein MukB (1503 aa).

The segment covering 1 to 19 (MMNTNELFDQTAVNSSQDK) has biased composition (polar residues). The interval 1–21 (MMNTNELFDQTAVNSSQDKPL) is disordered. Residue 65–72 (GGNGAGKS) coordinates ATP. 5 coiled-coil regions span residues 370–495 (MNAL…QRLS), 536–616 (DQKM…HRQQ), 662–697 (MQEMLRKEREATLERDELARTEAALASQISQLSQAD), 865–1173 (EMLM…SAEE), and 1238–1293 (DAIE…LQNI). The segment at 696-813 (ADGAEDIRLN…EVPLFGRAAR (118 aa)) is flexible hinge.

It belongs to the SMC family. MukB subfamily. As to quaternary structure, homodimerization via its hinge domain. Binds to DNA via its C-terminal region. Interacts, and probably forms a ternary complex, with MukE and MukF via its C-terminal region. The complex formation is stimulated by calcium or magnesium. Interacts with tubulin-related protein FtsZ.

Its subcellular location is the cytoplasm. It localises to the nucleoid. Plays a central role in chromosome condensation, segregation and cell cycle progression. Functions as a homodimer, which is essential for chromosome partition. Involved in negative DNA supercoiling in vivo, and by this means organize and compact chromosomes. May achieve or facilitate chromosome segregation by condensation DNA from both sides of a centrally located replisome during cell division. The polypeptide is Chromosome partition protein MukB (Haemophilus ducreyi (strain 35000HP / ATCC 700724)).